The sequence spans 506 residues: MASMFRPPESNRSHQKTPKLTLPVNLVQNAKSTNDGQHLNRSPYSSVNESPYSNNSTSATSTTSSMASNSTLLYNRSSTTTIKNRPVPPPLPPLVLTQKKDGIEYRVAGDSQLSERFSNLHVDITYKELLSSAPISTKLSNIDTTFIKKDLDTPEGEDSYPSTLLSAYDFSSSGSNSAPLSANNIISCSNLIQGKDVDQLEEEAWRFGHLKDEITTLGILGEGAGGSVAKCRLKNGKKVFALKTINTMNTDPEYQKQIFRELQFNKSFKSDYIVQYYGMFTDEQSSSIYIAMEYMGGKSLEATYKNLLKRGGRISERVIGKIAESVLRGLSYLHERKVIHRDIKPQNILLNEKGEIKLCDFGVSGEAVNSLAMTFTGTSFYMAPERIQGQPYSVTCDVWSLGLTLLEVAGGRFPFESDKITQNVAPIELLTMILTFSPQLKDEPELDISWSKTFRSFIDYCLKKDARERPSPRQMLKHPWIVGQMKKKVNMERFVKKCWEKEKDGI.

The segment at 1–69 (MASMFRPPES…TSTTSSMASN (69 aa)) is disordered. Over residues 26–52 (LVQNAKSTNDGQHLNRSPYSSVNESPY) the composition is skewed to polar residues. A compositionally biased stretch (low complexity) spans 53–69 (SNNSTSATSTTSSMASN). Positions 214 to 481 (ITTLGILGEG…PRQMLKHPWI (268 aa)) constitute a Protein kinase domain. ATP contacts are provided by residues 220–228 (LGEGAGGSV) and Lys243. Asp342 functions as the Proton acceptor in the catalytic mechanism.

The protein belongs to the protein kinase superfamily. STE Ser/Thr protein kinase family. MAP kinase kinase subfamily.

The catalysed reaction is L-seryl-[protein] + ATP = O-phospho-L-seryl-[protein] + ADP + H(+). The enzyme catalyses L-threonyl-[protein] + ATP = O-phospho-L-threonyl-[protein] + ADP + H(+). It carries out the reaction L-tyrosyl-[protein] + ATP = O-phospho-L-tyrosyl-[protein] + ADP + H(+). Serine/threonine protein kinase involved in a signal transduction pathway that plays a role in yeast cell morphogenesis and cell growth. This pathway seems to start by SMP3; then involves the kinase PKC1 that may act on the BCK1 kinase that then phosphorylates MKK1 and MKK2 which themselves phosphorylate the MPK1 kinase. The sequence is that of MAP kinase kinase MKK2/SSP33 (MKK2) from Saccharomyces cerevisiae (strain ATCC 204508 / S288c) (Baker's yeast).